The sequence spans 1042 residues: Isoleucine--tRNA ligase (1042 aa).

The 'HIGH' region signature appears at 48–58; it reads PFATGLPHFGH. Residues 594 to 598 carry the 'KMSKS' region motif; the sequence is KMSKS. K597 is an ATP binding site.

It belongs to the class-I aminoacyl-tRNA synthetase family. IleS type 2 subfamily. In terms of assembly, monomer. The cofactor is Zn(2+).

It localises to the cytoplasm. The catalysed reaction is tRNA(Ile) + L-isoleucine + ATP = L-isoleucyl-tRNA(Ile) + AMP + diphosphate. Its function is as follows. Catalyzes the attachment of isoleucine to tRNA(Ile). As IleRS can inadvertently accommodate and process structurally similar amino acids such as valine, to avoid such errors it has two additional distinct tRNA(Ile)-dependent editing activities. One activity is designated as 'pretransfer' editing and involves the hydrolysis of activated Val-AMP. The other activity is designated 'posttransfer' editing and involves deacylation of mischarged Val-tRNA(Ile). In Borreliella afzelii (strain PKo) (Borrelia afzelii), this protein is Isoleucine--tRNA ligase.